Here is a 306-residue protein sequence, read N- to C-terminus: Ornithine carbamoyltransferase (306 aa).

Carbamoyl phosphate is bound by residues 53 to 56, glutamine 80, arginine 104, and 131 to 134; these read STRT and HPCQ. L-ornithine-binding positions include asparagine 162, aspartate 219, and 223–224; that span reads SM. Residues 259 to 260 and arginine 287 each bind carbamoyl phosphate; that span reads CL.

This sequence belongs to the aspartate/ornithine carbamoyltransferase superfamily. OTCase family.

It localises to the cytoplasm. The enzyme catalyses carbamoyl phosphate + L-ornithine = L-citrulline + phosphate + H(+). Its pathway is amino-acid biosynthesis; L-arginine biosynthesis; L-arginine from L-ornithine and carbamoyl phosphate: step 1/3. Functionally, reversibly catalyzes the transfer of the carbamoyl group from carbamoyl phosphate (CP) to the N(epsilon) atom of ornithine (ORN) to produce L-citrulline. This Acinetobacter baumannii (strain ATCC 17978 / DSM 105126 / CIP 53.77 / LMG 1025 / NCDC KC755 / 5377) protein is Ornithine carbamoyltransferase.